The chain runs to 1116 residues: Pleckstrin homology domain-containing family A member 5 (1116 aa).

Ala-2 carries the post-translational modification N-acetylalanine. In terms of domain architecture, WW 1 spans 10–43; that stretch reads ISLPRSWTYGITRGGRVFFINEEAKSTTWLHPVT. A Phosphoserine modification is found at Ser-55. In terms of domain architecture, WW 2 spans 56–89; the sequence is TDLPTGWEEAYTFEGARYYINHNERKVTCKHPVT. The tract at residues 140–163 is disordered; sequence SPVGRTSRASKKVHNFGKRSNSIK. The span at 147 to 156 shows a compositional bias: basic residues; it reads RASKKVHNFG. In terms of domain architecture, PH spans 169 to 268; the sequence is PVVRRGWLYK…WMKAMLDAAL (100 aa). A Glycyl lysine isopeptide (Lys-Gly) (interchain with G-Cter in SUMO2) cross-link involves residue Lys-301. Ser-382 and Ser-410 each carry phosphoserine. A phosphothreonine mark is found at Thr-438 and Thr-460. Positions 459-495 are disordered; sequence RTLPRNSKTRPESICSVTPSTHDKTLGPGAEEKRRSM. A compositionally biased stretch (basic and acidic residues) spans 479–495; that stretch reads THDKTLGPGAEEKRRSM. Phosphoserine is present on residues Ser-568, Ser-607, Ser-809, Ser-855, Ser-933, and Ser-937. Disordered regions lie at residues 928 to 978 and 1025 to 1116; these read GASD…PATE and RNKD…FMCV. Polar residues predominate over residues 930-949; that stretch reads SDQSPLQSPSNLRDNPFRTT. Basic and acidic residues predominate over residues 952–978; that stretch reads RRRDDKELDTAIRENDVKPDHETPATE. Over residues 1036–1046 the composition is skewed to polar residues; sequence FSPQDETQTAN. A compositionally biased stretch (basic and acidic residues) spans 1047-1061; it reads HKPEEHPEENTKNSV. Polar residues predominate over residues 1070–1085; the sequence is SYESTPEVSRGNQTMA. A compositionally biased stretch (low complexity) spans 1088-1101; it reads SLSPSPESSASPVP.

Highly expressed in heart and kidney.

Its subcellular location is the cytoplasm. This chain is Pleckstrin homology domain-containing family A member 5 (PLEKHA5), found in Homo sapiens (Human).